Consider the following 2531-residue polypeptide: Neurogenic locus notch homolog protein 1 (2531 aa).

Residues 1–18 (MPRLLAPLLCLTLLPALA) form the signal peptide. Over 19–1725 (ARGLRCSQPS…VEPPLPSQLH (1707 aa)) the chain is Extracellular. EGF-like domains are found at residues 20–58 (RGLR…QRCQ), 59–99 (DPSP…PLCL), 102–139 (LANA…KSCQ), and 140–176 (QADP…PTCR). 33 disulfide bridges follow: C24–C37, C31–C46, C48–C57, C63–C74, C68–C87, C89–C98, C106–C117, C111–C127, C129–C138, C144–C155, C149–C164, C166–C175, C182–C195, C189–C204, C206–C215, C222–C233, C227–C243, C245–C254, C261–C272, C266–C281, C283–C292, C299–C312, C306–C321, C323–C332, C339–C350, C344–C359, C361–C370, C376–C387, C381–C398, C400–C409, C416–C429, C423–C438, and C440–C449. N41 is a glycosylation site (N-linked (GlcNAc...) asparagine). The O-linked (Glc...) serine glycan is linked to S65. A glycan (O-linked (Fuc...) threonine) is linked at T73. The O-linked (Fuc...) threonine glycan is linked to T116. The O-linked (Glc...) serine glycan is linked to S146. Residues 178-216 (DVNECSQNPGLCRHGGTCHNEIGSYRCACRATHTGPHCE) enclose the EGF-like 5; calcium-binding domain. T194 carries O-linked (Fuc...) threonine glycosylation. The 38-residue stretch at 218–255 (PYVPCSPSPCQNGGTCRPTGDTTHECACLPGFAGQNCE) folds into the EGF-like 6 domain. T232 is a glycosylation site (O-linked (Fuc...) threonine; alternate). T232 is a glycosylation site (O-linked (GalNAc...) threonine; alternate). The EGF-like 7; calcium-binding domain occupies 257–293 (NVDDCPGNNCKNGGACVDGVNTYNCRCPPEWTGQYCT). Positions 295–333 (DVDECQLMPNACQNGGTCHNSHGGYNCVCVNGWTGEDCS) constitute an EGF-like 8; calcium-binding domain. O-linked (Fuc...) threonine glycosylation occurs at T311. The region spanning 335 to 371 (NIDDCASAACFQGATCHDRVASFYCECPHGRTGLLCH) is the EGF-like 9; calcium-binding domain. A glycan (O-linked (Glc...) serine) is linked at S341. The O-linked (Fuc...) threonine glycan is linked to T349. One can recognise an EGF-like 10 domain in the interval 372-410 (LNDACISNPCNEGSNCDTNPVNGKAICTCPSGYTGPACS). O-linked (Glc...) serine glycosylation occurs at S378. Positions 412-450 (DVDECALGANPCEHAGKCLNTLGSFECQCLQGYTGPRCE) constitute an EGF-like 11; calcium-binding domain. The segment at 420-421 (AN) is interaction with DLL4. 2 residues coordinate Ca(2+): T432 and S435. O-linked (Glc...) serine glycosylation is present at S435. The interval 448–452 (RCEID) is interaction with DLL4. The Ca(2+) site is built by D452, V453, and E455. One can recognise an EGF-like 12; calcium-binding domain in the interval 452–488 (DVNECISNPCQNDATCLDQIGEFQCICMPGYEGVYCE). 3 disulfide bridges follow: C456/C467, C461/C476, and C478/C487. Residue S458 is glycosylated (O-linked (Glc...) serine). An O-linked (Fuc...) threonine glycan is attached at T466. Positions 469 and 470 each coordinate Ca(2+). Residues N490, T491, and E493 each contribute to the Ca(2+) site. Positions 490–526 (NTDECASSPCLHNGRCVDKINEFLCQCPKGFSGHLCQ) constitute an EGF-like 13; calcium-binding domain. 75 disulfides stabilise this stretch: C494-C505, C499-C514, C516-C525, C532-C543, C537-C552, C554-C563, C570-C580, C575-C589, C591-C600, C607-C618, C612-C627, C629-C638, C645-C655, C650-C664, C666-C675, C682-C693, C687-C702, C704-C713, C720-C730, C725-C739, C741-C750, C757-C768, C762-C777, C779-C788, C795-C806, C800-C815, C817-C826, C833-C844, C838-C855, C857-C866, C873-C884, C878-C893, C895-C904, C911-C922, C916-C931, C933-C942, C949-C960, C954-C969, C971-C980, C987-C998, C992-C1007, C1009-C1018, C1025-C1036, C1030-C1045, C1047-C1056, C1063-C1074, C1068-C1083, C1085-C1094, C1101-C1122, C1116-C1131, C1133-C1142, C1149-C1160, C1154-C1169, C1171-C1180, C1187-C1198, C1192-C1207, C1209-C1218, C1225-C1244, C1238-C1253, C1255-C1264, C1271-C1284, C1276-C1293, C1295-C1304, C1311-C1322, C1316-C1334, C1336-C1345, C1352-C1363, C1357-C1372, C1374-C1383, C1391-C1403, C1397-C1414, C1416-C1425, C1449-C1472, C1454-C1467, and C1463-C1479. The O-linked (Glc...) serine glycan is linked to S496. D507 and K508 together coordinate Ca(2+). The EGF-like 14; calcium-binding domain maps to 528–564 (DVDECASTPCKNGAKCLDGPNTYTCVCTEGYTGTHCE). O-linked (Glc...) serine glycosylation is present at S534. An EGF-like 15; calcium-binding domain is found at 566 to 601 (DIDECDPDPCHYGLCKDGVATFTCLCQPGYTGHHCE). Residues 603–639 (NINECHSQPCRHGGTCQDRDNYYLCLCLKGTTGPNCE) form the EGF-like 16; calcium-binding domain. An O-linked (Glc...) serine glycan is attached at S609. Residue T617 is glycosylated (O-linked (Fuc...) threonine). The 36-residue stretch at 641-676 (NLDDCASNPCDSGTCLDKIDGYECACEPGYTGSMCN) folds into the EGF-like 17; calcium-binding domain. The O-linked (Glc...) serine glycan is linked to S647. Residues 678 to 714 (NIDECAGSPCHNGGTCEDGIAGFTCRCPEGYHDPTCL) form the EGF-like 18; calcium-binding domain. O-linked (Fuc...) threonine glycosylation is present at T692. Residues 716–751 (EVNECNSNPCIHGACRDGLNGYKCDCAPGWSGTNCD) enclose the EGF-like 19; calcium-binding domain. S722 carries an O-linked (Glc...) serine glycan. The EGF-like 20; calcium-binding domain maps to 753–789 (NNNECESNPCVNGGTCKDMTSGYVCTCREGFSGPNCQ). S759 is a glycosylation site (O-linked (Glc...) serine). O-linked (Fuc...) threonine glycosylation is present at T767. S784 carries an O-linked (GlcNAc) serine glycan. An EGF-like 21; calcium-binding domain is found at 791–827 (NINECASNPCLNQGTCIDDVAGYKCNCPLPYTGATCE). An O-linked (Glc...) serine glycan is attached at S797. O-linked (Fuc...) threonine glycosylation occurs at T805. Residues 829-867 (VLAPCATSPCKNSGVCKESEDYESFSCVCPTGWQGQTCE) form the EGF-like 22 domain. The EGF-like 23; calcium-binding domain maps to 869–905 (DINECVKSPCRHGASCQNTNGSYRCLCQAGYTGRNCE). N-linked (GlcNAc...) asparagine glycosylation occurs at N888. The O-linked (GlcNAc) threonine glycan is linked to T900. The EGF-like 24 domain maps to 907-943 (DIDDCRPNPCHNGGSCTDGVNAAFCDCLPGFQGAFCE). S921 carries an O-linked (Fuc) serine glycan. The 37-residue stretch at 945–981 (DINECASNPCQNGANCTDCVDSYTCTCPTGFNGIHCE) folds into the EGF-like 25; calcium-binding domain. A glycan (O-linked (Glc...) serine) is linked at S951. N-linked (GlcNAc...) asparagine glycosylation is present at N959. The 37-residue stretch at 983 to 1019 (NTPDCTESSCFNGGTCVDGINSFTCLCPPGFTGSYCQ) folds into the EGF-like 26 domain. T997 carries O-linked (Fuc...) threonine glycosylation. In terms of domain architecture, EGF-like 27; calcium-binding spans 1021–1057 (DVNECDSRPCLHGGTCQDSYGTYKCTCPQGYTGLNCQ). The O-linked (Glc...) serine glycan is linked to S1027. T1035 carries an O-linked (Fuc...) threonine glycan. EGF-like domains are found at residues 1059–1095 (LVRW…FNCD) and 1097–1143 (LSVS…SYCE). O-linked (Glc...) serine glycosylation occurs at S1065. Positions 1145–1181 (EVDECSPNPCQNGATCTDYLGGFSCKCVAGYHGSNCS) constitute an EGF-like 30; calcium-binding domain. Residue T1159 is glycosylated (O-linked (Fuc...) threonine). N1179 carries N-linked (GlcNAc...) asparagine glycosylation. One can recognise an EGF-like 31; calcium-binding domain in the interval 1183-1219 (EINECLSQPCQNGGTCIDLTNTYKCSCPRGTQGVHCE). Residue S1189 is glycosylated (O-linked (Glc...) serine). An O-linked (Fuc...) threonine glycan is attached at T1197. Positions 1221–1265 (NVDDCHPPLDPASRSPKCFNNGTCVDQVGGYTCTCPPGFVGERCE) constitute an EGF-like 32; calcium-binding domain. A glycan (N-linked (GlcNAc...) asparagine) is linked at N1241. 4 EGF-like domains span residues 1267–1305 (DVNE…RRCE), 1307–1346 (VING…ATCE), 1348–1384 (DART…PECQ), and 1387–1426 (ASSP…LLCH). Residue S1273 is glycosylated (O-linked (Glc...) serine). O-linked (Fuc...) threonine glycosylation is present at T1362. O-linked (GlcNAc...) threonine glycosylation occurs at T1379. An O-linked (Fuc...) threonine; alternate glycan is attached at T1402. Residue T1402 is glycosylated (O-linked (GalNAc...) threonine; alternate). LNR repeat units follow at residues 1449 to 1489 (CELP…PWKN), 1490 to 1531 (CTQS…CNPL), and 1532 to 1571 (YDQY…RLAA). Ca(2+)-binding residues include D1457, N1460, D1475, and D1478. An N-linked (GlcNAc...) asparagine glycan is attached at N1489. Disulfide bonds link C1490–C1514, C1496–C1509, C1505–C1521, C1536–C1549, and C1545–C1561. The N-linked (GlcNAc...) asparagine glycan is linked to N1587. The O-linked (GalNAc...) threonine glycan is linked to T1715. Residues 1718–1750 (PPLPSQLHLMYVAAAAFVLLFFVGCGVLLSRKR) are interaction with PSEN1. A helical transmembrane segment spans residues 1726 to 1746 (LMYVAAAAFVLLFFVGCGVLL). Residues 1747-2531 (SRKRRRQHGQ…QITHIPEAFK (785 aa)) lie on the Cytoplasmic side of the membrane. K1749 participates in a covalent cross-link: Glycyl lysine isopeptide (Lys-Gly) (interchain with G-Cter in ubiquitin). A disordered region spans residues 1770 to 1798 (KKKRREPLGEDSVGLKPLKNASDGALMDD). T1851 carries the phosphothreonine modification. ANK repeat units follow at residues 1917–1946 (TGET…DANI), 1950–1980 (MGRT…DLDA), 1984–2013 (DGTT…DVNA), 2017–2046 (LGKS…NKDM), and 2050–2079 (KEET…NRDI). Residues 1937–1945 (LLEASADAN) form an HIF1AN-binding region. At N1945 the chain carries (3S)-3-hydroxyasparagine; by HIF1AN. Residues 2004–2012 (LINSHADVN) are HIF1AN-binding. N2012 is subject to (3S)-3-hydroxyasparagine; by HIF1AN. Disordered regions lie at residues 2141–2185 (SATQ…DSSS), 2382–2428 (QPQN…SLPV), and 2440–2531 (PTSL…EAFK). Positions 2382 to 2395 (QPQNLQPPSQPHLS) are enriched in low complexity. The segment covering 2440–2478 (PTSLPSSMVPPMTTTQFLTPPSQHSYSSSPVDNTPSHQL) has biased composition (polar residues). Over residues 2488–2503 (PSPESPDQWSSSSPHS) the composition is skewed to low complexity. Positions 2504-2524 (NISDWSEGISSPPTSMPSQIT) are enriched in polar residues.

This sequence belongs to the NOTCH family. In terms of assembly, heterodimer of a C-terminal fragment N(TM) and an N-terminal fragment N(EC) which are probably linked by disulfide bonds. Interacts with DNER, DTX1, DTX2 and RBPJ/RBPSUH. Also interacts with MAML1, MAML2 and MAML3 which act as transcriptional coactivators for NOTCH1. Notch 1 intracellular domain interacts with SNW1; the interaction involves multimerized NOTCH1 NICD and is implicated in a formation of an intermediate preactivation complex which associates with DNA-bound CBF-1/RBPJ. The activated membrane-bound form interacts with AAK1 which promotes NOTCH1 stabilization. Forms a trimeric complex with FBXW7 and SGK1. Interacts with HIF1AN. HIF1AN negatively regulates the function of notch intracellular domain (NICD), accelerating myogenic differentiation. Interacts (via NICD) with SNAI1 (via zinc fingers); the interaction induces SNAI1 degradation via MDM2-mediated ubiquitination and inhibits SNAI1-induced cell invasion. Interacts (via NICD) with MDM2A. Interacts (via NICD) with BCL6; the interaction decreases MAML1 recruitment by NOTCH1 NICD on target genes DNA and inhibits NOTCH1 transactivation activity. Interacts with THBS4. Interacts (via the EGF-like repeat region) with CCN3 (via CTCK domain). Interacts (via EGF-like domains) with DLL4 (via N-terminal DSL and MNNL domains). Interacts with ZMIZ1. Interacts (via NICD domain) with MEGF10 (via the cytoplasmic domain). Interacts with DLL1 and JAG1. Interacts (via NICD domain) with PRAG1. Forms a complex with PRAG1, N1ICD and MAML1, in a MAML1-dependent manner. Interacts (via transmembrane region) with PSEN1; the interaction is direct. Interacts with ZFP64. Post-translationally, synthesized in the endoplasmic reticulum as an inactive form which is proteolytically cleaved by a furin-like convertase in the trans-Golgi network before it reaches the plasma membrane to yield an active, ligand-accessible form. Cleavage results in a C-terminal fragment N(TM) and a N-terminal fragment N(EC). Following ligand binding, it is cleaved by ADAM17 to yield a membrane-associated intermediate fragment called notch extracellular truncation (NEXT). Following endocytosis, this fragment is then cleaved by one of the catalytic subunits of gamma-secretase (PSEN1 or PSEN2) to release a Notch-derived peptide containing the intracellular domain (NICD) from the membrane. Phosphorylated. In terms of processing, O-glycosylated on the EGF-like domains. O-glucosylated at Ser-435 by KDELC1 and KDELC2. Contains both O-linked fucose and O-linked glucose in the EGF-like domains 11, 12 and 13, which are interacting with the residues on DLL4. O-linked glycosylation by GALNT11 is involved in determination of left/right symmetry: glycosylation promotes activation of NOTCH1, possibly by promoting cleavage by ADAM17, modulating the balance between motile and immotile (sensory) cilia at the left-right organiser (LRO). MFNG-, RFNG- and LFNG-mediated modification of O-fucose residues at specific EGF-like domains results in inhibition of its activation by JAG1 and enhancement of its activation by DLL1 via an increased binding to DLL1. Post-translationally, ubiquitinated. Undergoes 'Lys-29'-linked polyubiquitination by ITCH; promotes the lysosomal degradation of non-activated internalized NOTCH1. Deubiquitination by USP12 is required for transport of internalized non-activated receptor from late endosomes to lysosomes for degradation. Monoubiquitination at Lys-1749 is required for activation by gamma-secretase cleavage, it promotes interaction with AAK1, which stabilizes it. Deubiquitination by EIF3F is necessary for nuclear import of activated Notch. Hydroxylated at Asn-1945 and Asn-2012 by HIF1AN. Hydroxylation reduces affinity for HI1AN and may thus indirectly modulate negative regulation of NICD. As to expression, expressed in the brain, kidney and spleen. Expressed in postnatal central nervous system (CNS) germinal zones and, in early postnatal life, within numerous cells throughout the CNS. Found in both subventricular and ventricular germinal zones.

The protein localises to the cell membrane. It is found in the late endosome membrane. Its subcellular location is the nucleus. Functions as a receptor for membrane-bound ligands Jagged-1 (JAG1), Jagged-2 (JAG2) and Delta-1 (DLL1) to regulate cell-fate determination. Upon ligand activation through the released notch intracellular domain (NICD) it forms a transcriptional activator complex with RBPJ/RBPSUH and activates genes of the enhancer of split locus. Affects the implementation of differentiation, proliferation and apoptotic programs. Involved in angiogenesis; negatively regulates endothelial cell proliferation and migration and angiogenic sprouting. Involved in the maturation of both CD4(+) and CD8(+) cells in the thymus. Important for follicular differentiation and possibly cell fate selection within the follicle. During cerebellar development, functions as a receptor for neuronal DNER and is involved in the differentiation of Bergmann glia. Represses neuronal and myogenic differentiation. May play an essential role in postimplantation development, probably in some aspect of cell specification and/or differentiation. May be involved in mesoderm development, somite formation and neurogenesis. May enhance HIF1A function by sequestering HIF1AN away from HIF1A. Required for the THBS4 function in regulating protective astrogenesis from the subventricular zone (SVZ) niche after injury. Involved in determination of left/right symmetry by modulating the balance between motile and immotile (sensory) cilia at the left-right organiser (LRO). This Rattus norvegicus (Rat) protein is Neurogenic locus notch homolog protein 1 (Notch1).